Consider the following 341-residue polypeptide: NADH-quinone oxidoreductase subunit H (341 aa).

8 helical membrane-spanning segments follow: residues 16-36, 86-106, 119-139, 165-185, 191-211, 254-274, 276-296, and 315-335; these read LLII…AVAY, VVFV…WAVI, VGVL…IMAG, IGFI…SDVV, MWFI…GLAE, GAMT…LGWL, IPGL…FLWV, and VFLP…TAFG.

Belongs to the complex I subunit 1 family. In terms of assembly, NDH-1 is composed of 14 different subunits. Subunits NuoA, H, J, K, L, M, N constitute the membrane sector of the complex.

The protein localises to the cell inner membrane. It carries out the reaction a quinone + NADH + 5 H(+)(in) = a quinol + NAD(+) + 4 H(+)(out). Its function is as follows. NDH-1 shuttles electrons from NADH, via FMN and iron-sulfur (Fe-S) centers, to quinones in the respiratory chain. The immediate electron acceptor for the enzyme in this species is believed to be ubiquinone. Couples the redox reaction to proton translocation (for every two electrons transferred, four hydrogen ions are translocated across the cytoplasmic membrane), and thus conserves the redox energy in a proton gradient. This subunit may bind ubiquinone. In Paramagnetospirillum magneticum (strain ATCC 700264 / AMB-1) (Magnetospirillum magneticum), this protein is NADH-quinone oxidoreductase subunit H.